A 498-amino-acid polypeptide reads, in one-letter code: Glycerol kinase (498 aa).

Thr12 is an ADP binding site. The ATP site is built by Thr12, Thr13, and Ser14. Thr12 provides a ligand contact to sn-glycerol 3-phosphate. Arg16 provides a ligand contact to ADP. 4 residues coordinate sn-glycerol 3-phosphate: Arg82, Glu83, Tyr134, and Asp243. Glycerol is bound by residues Arg82, Glu83, Tyr134, Asp243, and Gln244. 2 residues coordinate ADP: Thr265 and Gly308. ATP contacts are provided by Thr265, Gly308, Gln312, and Gly411. Gly411 contributes to the ADP binding site.

It belongs to the FGGY kinase family.

The enzyme catalyses glycerol + ATP = sn-glycerol 3-phosphate + ADP + H(+). It participates in polyol metabolism; glycerol degradation via glycerol kinase pathway; sn-glycerol 3-phosphate from glycerol: step 1/1. Its activity is regulated as follows. Inhibited by fructose 1,6-bisphosphate (FBP). Functionally, key enzyme in the regulation of glycerol uptake and metabolism. Catalyzes the phosphorylation of glycerol to yield sn-glycerol 3-phosphate. In Brucella suis biovar 1 (strain 1330), this protein is Glycerol kinase.